The primary structure comprises 169 residues: Lipoprotein signal peptidase (169 aa).

The next 4 helical transmembrane spans lie at Leu-10 to Phe-30, Val-41 to Phe-61, Trp-68 to Leu-88, and Gly-94 to Tyr-114. Active-site residues include Asp-124 and Asp-143. The chain crosses the membrane as a helical span at residues Tyr-135–Leu-155.

Belongs to the peptidase A8 family.

Its subcellular location is the cell inner membrane. The catalysed reaction is Release of signal peptides from bacterial membrane prolipoproteins. Hydrolyzes -Xaa-Yaa-Zaa-|-(S,diacylglyceryl)Cys-, in which Xaa is hydrophobic (preferably Leu), and Yaa (Ala or Ser) and Zaa (Gly or Ala) have small, neutral side chains.. Its pathway is protein modification; lipoprotein biosynthesis (signal peptide cleavage). Functionally, this protein specifically catalyzes the removal of signal peptides from prolipoproteins. This chain is Lipoprotein signal peptidase, found in Pseudomonas paraeruginosa (strain DSM 24068 / PA7) (Pseudomonas aeruginosa (strain PA7)).